Here is a 345-residue protein sequence, read N- to C-terminus: CCAAT/enhancer-binding protein beta (345 aa).

Residues 1-24 (MQRLVAWDPACLPLPPPPPAFKSM) are required for Lys-174 sumoylation. Arginine 3 is modified (asymmetric dimethylarginine; by CARM1). The required for MYC transcriptional repression stretch occupies residues 24–135 (MEVANFYYEA…YGGKNCKKPA (112 aa)). Lysine 43 carries the post-translational modification N6-acetyllysine; alternate. Lysine 43 is subject to N6-methylated lysine; alternate. Disordered regions lie at residues 46-67 (PAAP…GSIG) and 79-116 (LEPL…QHHD). A compositionally biased stretch (pro residues) spans 47-59 (AAPPAARPGPRPP). Residues 84-100 (APQAPAPATATDTFEAA) show a composition bias toward low complexity. Residues 116-124 (DFLSDLFSD) carry the 9aaTAD motif. N6-acetyllysine; by KAT2A and KAT2B is present on residues lysine 129 and lysine 132. Lysine 133 bears the N6-acetyllysine; by KAT2A and KAT2B; alternate mark. Residue lysine 133 forms a Glycyl lysine isopeptide (Lys-Gly) (interchain with G-Cter in SUMO2); alternate linkage. The disordered stretch occupies residues 157–178 (FAPLHPPPPPPPPPAELKAEPG). Over residues 160–171 (LHPPPPPPPPPA) the composition is skewed to pro residues. Residue lysine 174 forms a Glycyl lysine isopeptide (Lys-Gly) (interchain with G-Cter in SUMO2); alternate linkage. Residue lysine 174 forms a Glycyl lysine isopeptide (Lys-Gly) (interchain with G-Cter in SUMO); alternate linkage. Residues lysine 185 and lysine 187 each participate in a glycyl lysine isopeptide (Lys-Gly) (interchain with G-Cter in SUMO2) cross-link. Residues 218–232 (SGSSGSLSTSSSSSP) show a composition bias toward low complexity. Positions 218 to 271 (SGSSGSLSTSSSSSPPGTPSPADAKAPPTACYAGAAPAPSQVKSKAKKTVDKHS) are disordered. Residue threonine 226 is modified to Phosphothreonine; by GSK3-beta. O-linked (GlcNAc) serine glycans are attached at residues serine 227 and serine 228. Phosphoserine; by GSK3-beta is present on serine 231. Threonine 235 carries the phosphothreonine; by RPS6KA1, CDK2 and MAPK modification. Glycyl lysine isopeptide (Lys-Gly) (interchain with G-Cter in SUMO2) cross-links involve residues lysine 260 and lysine 262. Threonine 266 is modified (phosphothreonine; by RPS6KA1 and PKC/PRKCA). In terms of domain architecture, bZIP spans 271–334 (SDEYKIRRER…STLRNLFKQL (64 aa)). A basic motif region spans residues 275–295 (KIRRERNNIAVRKSRDKAKMR). At serine 288 the chain carries Phosphoserine; by PKC/PRKCA. The segment at 297–304 (LETQHKVL) is leucine-zipper. Phosphoserine; by CaMK2 is present on serine 325. Residue lysine 332 forms a Glycyl lysine isopeptide (Lys-Gly) (interchain with G-Cter in SUMO2) linkage.

The protein belongs to the bZIP family. C/EBP subfamily. In terms of assembly, binds DNA as a homodimer and as a heterodimer. Interacts with ATF4. Binds DNA as a heterodimer with ATF4. Interacts with MYB; within the complex, MYB and CEBPB bind to different promoter regions. Can form stable heterodimers with CEBPD. Can form stable heterodimers with CEBPA and CEBPE. Interacts with SIX1. Isoform 2 and isoform 3 also form heterodimers. Interacts with TRIM28 and PTGES2. Interacts with PRDM16. Interacts with CCDC85B. Forms a complex with THOC5. Interacts with ZNF638; this interaction increases transcriptional activation. Interacts with CIDEA and CIDEC; these interactions increase transcriptional activation of a subset of CEBPB downstream target genes. Interacts with DDIT3/CHOP. Interacts with EP300; recruits EP300 to chromatin. Interacts with RORA; the interaction disrupts interaction with EP300. Interacts (not methylated) with MED23, MED26, SMARCA2, SMARCB1 and SMARCC1. Interacts with KAT2A and KAT2B. Interacts with ATF5; EP300 is required for ATF5 and CEBPB interaction and DNA binding. Interacts with NFE2L1; the heterodimer represses expression of DSPP during odontoblast differentiation. Methylated. Methylation at Arg-3 by CARM1 and at Lys-43 by EHMT2 inhibit transactivation activity. Methylation is probably inhibited by phosphorylation at Thr-235. Post-translationally, sumoylated by polymeric chains of SUMO2 or SUMO3. Sumoylation at Lys-174 is required for inhibition of T-cells proliferation. In adipocytes, sumoylation at Lys-174 by PIAS1 leads to ubiquitination and subsequent proteasomal degradation. Desumoylated by SENP2, which abolishes ubiquitination and stabilizes protein levels. In terms of processing, ubiquitinated, leading to proteasomal degradation. Phosphorylated at Thr-235 by MAPK and CDK2, serves to prime phosphorylation at Thr-226 and Ser-231 by GSK3B and acquire DNA-binding as well as transactivation activities, required to induce adipogenesis. MAPK and CDK2 act sequentially to maintain Thr-235 in the primed phosphorylated state during mitotical cloning expansion and thereby progression of terminal differentiation. Phosphorylation at Thr-266 enhances transactivation activity. Phosphorylation at Ser-325 in response to calcium increases transactivation activity. Phosphorylated at Thr-235 by RPS6KA1. Post-translationally, O-glycosylated, glycosylation at Ser-227 and Ser-228 prevents phosphorylation on Thr-235, Ser-231 and Thr-226 and DNA binding activity which delays the adipocyte differentiation program. In terms of processing, acetylated. Acetylation at Lys-43 is an important and dynamic regulatory event that contributes to its ability to transactivate target genes, including those associated with adipogenesis and adipocyte function. Deacetylation by HDAC1 represses its transactivation activity. Acetylated by KAT2A and KAT2B within a cluster of lysine residues between amino acids 129-133, this acetylation is strongly induced by glucocorticoid treatment and enhances transactivation activity. As to expression, expressed at low levels in the lung, kidney and spleen.

Its subcellular location is the nucleus. The protein localises to the cytoplasm. In terms of biological role, important transcription factor regulating the expression of genes involved in immune and inflammatory responses. Also plays a significant role in adipogenesis, as well as in the gluconeogenic pathway, liver regeneration, and hematopoiesis. The consensus recognition site is 5'-T[TG]NNGNAA[TG]-3'. Its functional capacity is governed by protein interactions and post-translational protein modifications. During early embryogenesis, plays essential and redundant roles with CEBPA. Has a promitotic effect on many cell types such as hepatocytes and adipocytes but has an antiproliferative effect on T-cells by repressing MYC expression, facilitating differentiation along the T-helper 2 lineage. Binds to regulatory regions of several acute-phase and cytokines genes and plays a role in the regulation of acute-phase reaction and inflammation. Also plays a role in intracellular bacteria killing. During adipogenesis, is rapidly expressed and, after activation by phosphorylation, induces CEBPA and PPARG, which turn on the series of adipocyte genes that give rise to the adipocyte phenotype. The delayed transactivation of the CEBPA and PPARG genes by CEBPB appears necessary to allow mitotic clonal expansion and thereby progression of terminal differentiation. Essential for female reproduction because of a critical role in ovarian follicle development. Restricts osteoclastogenesis: together with NFE2L1; represses expression of DSPP during odontoblast differentiation. Its function is as follows. Essential for gene expression induction in activated macrophages. Plays a major role in immune responses such as CD4(+) T-cell response, granuloma formation and endotoxin shock. Not essential for intracellular bacteria killing. Functionally, acts as a dominant negative through heterodimerization with isoform 2. Promotes osteoblast differentiation and osteoclastogenesis. In Homo sapiens (Human), this protein is CCAAT/enhancer-binding protein beta.